We begin with the raw amino-acid sequence, 547 residues long: MAPSVGILGERDQGQDVRTNNVTAVMAIANIVKSSLGPQGLDKMLVDDVGDVTITNDGATILRQLEVQHPAAKVIVELSQLQDKEVGDGTTSVVILAAELLKRANELIKNKVHPTSIITGFKIAAKEACTYIKEHLAISVEELGREALINAAKTSMSSKLIGPESNLFSQIVVDAVESVKMTNLMGDTKYPIKNVKIIKSHGQSTLQSQLIRGYVLQTQRCDQQMKTRIEKAKIALLDFNLNKFRLQMGIQILVNDPKNLEKIRFKECEILKERCKKIIEAGANVIITSAGMDDVATKYLVEAGVMGLRRVDKHDLRRLAKATGGTIVTTLATPEGDEVFEASYLGECAEVYEEAVGDNDCIFFKGTKRANCASIIIRGANEFMVDEVDRSLHDSLCVVKRTLESGYVVPGGGAVEIALSIKLEDFARTLGTKEQTAVAEFCEALNIIPKVLAANAAQDATELVSKLRALHAASQSSDDPAKKELKNCGLDLSLGKVRNNVKAGVLEPMVSKIKSLRFATEAAITILRIDDMIKLNPQNEELPQGRH.

This sequence belongs to the TCP-1 chaperonin family. In terms of assembly, heterooligomeric complex of about 850 to 900 kDa that forms two stacked rings, 12 to 16 nm in diameter.

Its subcellular location is the cytoplasm. In terms of biological role, molecular chaperone; assists the folding of proteins upon ATP hydrolysis. Known to play a role, in vitro, in the folding of actin and tubulin. In Tetrahymena pyriformis, this protein is T-complex protein 1 subunit alpha.